The primary structure comprises 333 residues: Tetraacyldisaccharide 4'-kinase (333 aa).

An ATP-binding site is contributed by T60–T67.

It belongs to the LpxK family.

It catalyses the reaction a lipid A disaccharide + ATP = a lipid IVA + ADP + H(+). It functions in the pathway glycolipid biosynthesis; lipid IV(A) biosynthesis; lipid IV(A) from (3R)-3-hydroxytetradecanoyl-[acyl-carrier-protein] and UDP-N-acetyl-alpha-D-glucosamine: step 6/6. Functionally, transfers the gamma-phosphate of ATP to the 4'-position of a tetraacyldisaccharide 1-phosphate intermediate (termed DS-1-P) to form tetraacyldisaccharide 1,4'-bis-phosphate (lipid IVA). This is Tetraacyldisaccharide 4'-kinase from Pseudomonas putida (strain GB-1).